We begin with the raw amino-acid sequence, 386 residues long: Phosphoglycerate kinase (386 aa).

Residues 21 to 23, Arg36, 59 to 62, Arg112, and Arg145 contribute to the substrate site; these read DLN and HLGR. Residues Lys196, Glu313, and 339 to 342 contribute to the ATP site; that span reads GGDT.

It belongs to the phosphoglycerate kinase family. Monomer.

Its subcellular location is the cytoplasm. It catalyses the reaction (2R)-3-phosphoglycerate + ATP = (2R)-3-phospho-glyceroyl phosphate + ADP. It participates in carbohydrate degradation; glycolysis; pyruvate from D-glyceraldehyde 3-phosphate: step 2/5. This Haemophilus influenzae (strain ATCC 51907 / DSM 11121 / KW20 / Rd) protein is Phosphoglycerate kinase (pgk).